The following is a 585-amino-acid chain: MAPSTPLLTVRGSEGLYMVNGPPHFTESTVFPRESGKNCKVCIFSKDGTLFAWGNGEKVNIISVTNKGLLHSFDLLKAVCLEFSPKNTVLATWQPYTTSKDGTAGIPNLQLYDVKTGTCLKSFIQKKMQNWCPSWSEDETLCARNVNNEVHFFENNNFNTIANKLHLQKINDFVLSPGPQPYKVAVYVPGSKGAPSFVRLYQYPNFAGPHAALANKSFFKADKVTMLWNKKATAVLVIASTDVDKTGASYYGEQTLHYIATNGESAVVQLPKNGPIYDVVWNSSSTEFCAVYGFMPAKATIFNLKCDPVFDFGTGPRNAAYYSPHGHILVLAGFGNLRGQMEVWDVKNYKLISKPVASDSTYFAWCPDGEHILTATCAPRLRVNNGYKIWHYTGSILHKYDVPSNAELWQVSWQPFLDGIFPAKTITYQAVPSEVPNEEPKVATAYRPPALRNKPITNSKLHEEEPPQNMKPQSGNDKPLSKTALKNQRKHEAKKAAKQEARSDKSPDLAPTPAPQSTPRNTVSQSISGDPEIDKKIKNLKKKLKAIEQLKEQAATGKQLEKNQLEKIQKETALLQELEDLELGI.

Met1 is subject to N-acetylmethionine. Ala2 is subject to N-acetylalanine; in Eukaryotic translation initiation factor 2A, N-terminally processed. A Phosphothreonine modification is found at Thr5. WD repeat units follow at residues Gly56–Lys100, Asp101–Asn159, Thr160–His210, Ala211–Glu264, Ser265–Cys306, Asp307–Asn348, and Tyr349–His391. The segment at Glu434 to Asp534 is disordered. Positions Lys494–Pro507 are enriched in basic and acidic residues. Phosphoserine is present on residues Ser503, Ser506, and Ser517. Polar residues predominate over residues Ser517–Ser528. Thr518 is modified (phosphothreonine). Ser526 carries the post-translational modification Phosphoserine. Positions Pro531–Glu582 form a coiled coil.

This sequence belongs to the WD repeat EIF2A family. Widely expressed. Expressed at higher level in pancreas, heart, brain and placenta.

Functionally, functions in the early steps of protein synthesis of a small number of specific mRNAs. Acts by directing the binding of methionyl-tRNAi to 40S ribosomal subunits. In contrast to the eIF-2 complex, it binds methionyl-tRNAi to 40S subunits in a codon-dependent manner, whereas the eIF-2 complex binds methionyl-tRNAi to 40S subunits in a GTP-dependent manner. This Homo sapiens (Human) protein is Eukaryotic translation initiation factor 2A (EIF2A).